Here is a 481-residue protein sequence, read N- to C-terminus: Argininosuccinate lyase (481 aa).

The span at 1–17 (MKNAPVDTQSDAATSFE) shows a compositional bias: polar residues. Residues 1-25 (MKNAPVDTQSDAATSFEGTAANPQW) are disordered.

This sequence belongs to the lyase 1 family. Argininosuccinate lyase subfamily.

The protein resides in the cytoplasm. It catalyses the reaction 2-(N(omega)-L-arginino)succinate = fumarate + L-arginine. Its pathway is amino-acid biosynthesis; L-arginine biosynthesis; L-arginine from L-ornithine and carbamoyl phosphate: step 3/3. In Gluconobacter oxydans (strain 621H) (Gluconobacter suboxydans), this protein is Argininosuccinate lyase.